The primary structure comprises 204 residues: Peptidyl-prolyl cis-trans isomerase CYP20-1 (204 aa).

Residues 1–23 (MASSVTLLLWSLLLLGTLSAIQA) form the signal peptide. Residues 38–201 (YFDVEIDGKA…SKVVIVDSGE (164 aa)) enclose the PPIase cyclophilin-type domain.

The protein belongs to the cyclophilin-type PPIase family. In terms of assembly, interacts with the PP2A A subunit PP2AA1/RCN1. In terms of tissue distribution, ubiquitous, mostly in aerial organs. Higher levels in leaf and buds, and lower levels in seedlings.

Its subcellular location is the endoplasmic reticulum. It localises to the secreted. It catalyses the reaction [protein]-peptidylproline (omega=180) = [protein]-peptidylproline (omega=0). With respect to regulation, binds cyclosporin A (CsA). CsA mediates some of its effects via an inhibitory action on PPIase. PPIases accelerate the folding of proteins. It catalyzes the cis-trans isomerization of proline imidic peptide bonds in oligopeptides. Seems to be involved in root development. The polypeptide is Peptidyl-prolyl cis-trans isomerase CYP20-1 (CYP20-1) (Arabidopsis thaliana (Mouse-ear cress)).